Reading from the N-terminus, the 418-residue chain is IQ domain-containing protein C (418 aa).

Positions 6 to 35 (FLRKVSTLQAGFRGFLVRRQFQSLRAEYEA) constitute an IQ domain. Disordered stretches follow at residues 101–142 (QKKT…SVSK), 230–264 (HHAE…KGRE), 280–299 (SQAG…QPFK), 327–355 (AETQ…AGPC), and 376–418 (GSLD…LQWR). Polar residues-rich tracts occupy residues 129–142 (KASQ…SVSK) and 249–259 (SVTSAGKTTAG). The stretch at 141–176 (SKMENADLGLSQSQQELQEQRNHLAMELLWLQQAIN) forms a coiled coil. The segment covering 390–404 (PPSAGSSGHGNTSEL) has biased composition (polar residues).

The chain is IQ domain-containing protein C (Iqcc) from Mus musculus (Mouse).